We begin with the raw amino-acid sequence, 186 residues long: Peptidyl-tRNA hydrolase (186 aa).

TRNA is bound at residue Tyr-16. His-21 functions as the Proton acceptor in the catalytic mechanism. Tyr-66, Asn-68, and Asn-114 together coordinate tRNA.

This sequence belongs to the PTH family. In terms of assembly, monomer.

It localises to the cytoplasm. It carries out the reaction an N-acyl-L-alpha-aminoacyl-tRNA + H2O = an N-acyl-L-amino acid + a tRNA + H(+). Its function is as follows. Hydrolyzes ribosome-free peptidyl-tRNAs (with 1 or more amino acids incorporated), which drop off the ribosome during protein synthesis, or as a result of ribosome stalling. Catalyzes the release of premature peptidyl moieties from peptidyl-tRNA molecules trapped in stalled 50S ribosomal subunits, and thus maintains levels of free tRNAs and 50S ribosomes. The chain is Peptidyl-tRNA hydrolase from Ureaplasma parvum serovar 3 (strain ATCC 700970).